A 92-amino-acid chain; its full sequence is Putative pterin-4-alpha-carbinolamine dehydratase (92 aa).

This sequence belongs to the pterin-4-alpha-carbinolamine dehydratase family.

The enzyme catalyses (4aS,6R)-4a-hydroxy-L-erythro-5,6,7,8-tetrahydrobiopterin = (6R)-L-erythro-6,7-dihydrobiopterin + H2O. The chain is Putative pterin-4-alpha-carbinolamine dehydratase from Haloarcula marismortui (strain ATCC 43049 / DSM 3752 / JCM 8966 / VKM B-1809) (Halobacterium marismortui).